Reading from the N-terminus, the 91-residue chain is Insertion element IS1 1 protein InsA (91 aa).

This sequence belongs to the IS1 elements InsA family.

In terms of biological role, absolutely required for transposition of IS1. The protein is Insertion element IS1 1 protein InsA (insA1) of Escherichia coli (strain K12).